Here is a 401-residue protein sequence, read N- to C-terminus: Phosphoglycerate kinase 3, cytosolic (401 aa).

(2R)-3-phosphoglycerate is bound by residues Val24, Asp25, Asn27, Arg41, Ser63, His64, Gly66, Arg67, Arg122, His154, and Arg155. Gly200 contributes to the ADP binding site. Gly200 is a CDP binding site. AMP contacts are provided by Lys202 and Lys206. Lys206 is an ATP binding site. Gly224 serves as a coordination point for ADP. Residue Gly224 participates in CDP binding. Gly225 and Gly297 together coordinate AMP. Gly225, Gly297, and Asn321 together coordinate ATP. CDP is bound by residues Gly322 and Phe327. Phe327 provides a ligand contact to ADP. Glu328 contributes to the AMP binding site. Positions 328, 359, and 360 each coordinate ATP. Position 359 (Asp359) interacts with Mg(2+).

This sequence belongs to the phosphoglycerate kinase family. In terms of assembly, monomer. Mg(2+) serves as cofactor. As to expression, expressed in roots, leaves and inflorescence.

The protein resides in the cytoplasm. The enzyme catalyses (2R)-3-phosphoglycerate + ATP = (2R)-3-phospho-glyceroyl phosphate + ADP. It functions in the pathway carbohydrate degradation; glycolysis; pyruvate from D-glyceraldehyde 3-phosphate: step 2/5. The polypeptide is Phosphoglycerate kinase 3, cytosolic (Arabidopsis thaliana (Mouse-ear cress)).